The primary structure comprises 335 residues: uncharacterized protein (335 aa).

3 disordered regions span residues 153 to 174 (LNDKEDEEKLDQTTESEESDRI), 218 to 239 (HTSVRRSMSSVSSSASSTQEEV), and 254 to 295 (RCKV…PVTS). A compositionally biased stretch (acidic residues) spans 156–170 (KEDEEKLDQTTESEE). Composition is skewed to low complexity over residues 222–234 (RRSMSSVSSSASS) and 275–295 (THTSVSSLSVHSVSPTPPVTS).

This is an uncharacterized protein from Caenorhabditis elegans.